The chain runs to 245 residues: UDP-2,3-diacylglucosamine hydrolase (245 aa).

Mn(2+)-binding residues include Asp-8, His-10, Asp-41, Asn-79, and His-114. 79-80 (NR) contributes to the substrate binding site. Asp-122, Ser-160, Lys-164, Lys-167, and His-195 together coordinate substrate. Mn(2+) contacts are provided by His-195 and His-197.

It belongs to the LpxH family. It depends on Mn(2+) as a cofactor.

The protein localises to the cell inner membrane. The enzyme catalyses UDP-2-N,3-O-bis[(3R)-3-hydroxytetradecanoyl]-alpha-D-glucosamine + H2O = 2-N,3-O-bis[(3R)-3-hydroxytetradecanoyl]-alpha-D-glucosaminyl 1-phosphate + UMP + 2 H(+). Its pathway is glycolipid biosynthesis; lipid IV(A) biosynthesis; lipid IV(A) from (3R)-3-hydroxytetradecanoyl-[acyl-carrier-protein] and UDP-N-acetyl-alpha-D-glucosamine: step 4/6. Its function is as follows. Hydrolyzes the pyrophosphate bond of UDP-2,3-diacylglucosamine to yield 2,3-diacylglucosamine 1-phosphate (lipid X) and UMP by catalyzing the attack of water at the alpha-P atom. Involved in the biosynthesis of lipid A, a phosphorylated glycolipid that anchors the lipopolysaccharide to the outer membrane of the cell. The chain is UDP-2,3-diacylglucosamine hydrolase from Aromatoleum aromaticum (strain DSM 19018 / LMG 30748 / EbN1) (Azoarcus sp. (strain EbN1)).